A 76-amino-acid chain; its full sequence is Omega-conotoxin-like TxO3 (76 aa).

The N-terminal stretch at 1–22 (MKLTCVVIVAVLFLTAWTFVTA) is a signal peptide. Positions 23–52 (VPHSSNALENLYLKAHHEMNNPEASELNKR) are excised as a propeptide. Disulfide bonds link Cys53-Cys67, Cys60-Cys71, and Cys66-Cys75.

This sequence belongs to the conotoxin O1 superfamily. In terms of tissue distribution, expressed by the venom duct.

Its subcellular location is the secreted. Omega-conotoxins act at presynaptic membranes, they bind and block voltage-gated calcium channels (Cav). The polypeptide is Omega-conotoxin-like TxO3 (TXO3) (Conus textile (Cloth-of-gold cone)).